The primary structure comprises 148 residues: Lipid droplet organization protein LDO16 (148 aa).

Topologically, residues 1-7 (MVSTATF) are cytoplasmic. Residues 8–28 (FFFVYLTLFVVIGFFSSLFII) traverse the membrane as a helical segment. P29 is a topological domain (lumenal). The chain crosses the membrane as a helical span at residues 30 to 50 (LLGISFVFAIGVVSFGFCSNM). Residues 51 to 148 (SFKMAQLIYV…NKAGNKFQLS (98 aa)) lie on the Cytoplasmic side of the membrane. Residues 83–110 (QEPQEPLSTLRPVSNPTIPSPLRQTARP) are disordered. Residues 93–109 (RPVSNPTIPSPLRQTAR) show a composition bias toward polar residues. A Phosphoserine modification is found at S102.

Belongs to the OSW5 family. As to quaternary structure, interacts specifically with the seipin complex FLD1-LDB16. Only a fraction appears to associate with the seipin core components, suggesting that it may be an ancillary subunit of the complex. Found to interact with many mitochondrial and peroxisomal proteins.

Its subcellular location is the endoplasmic reticulum membrane. It localises to the lipid droplet. Its function is as follows. Involved in lipid droplet (LD) organization. Functions primarily upon nutrient depletion, facilitating LD consumption by lipophagy. Required for correct LD distribution during entry into stationary phase, where LDs accumulate at nucleus-vacuole junction (NVJ) contact sites. Involved in membrane interaction in a manner similar to those of SNARE proteins, binding to partners present in mitochondria or peroxisomes. Its partner on the mitochondrion side might be TOM22, a mitochondrial outer membrane protein, linking lipid droplets and mitochondria by protein-protein interaction. Involved in spore wall assembly. The polypeptide is Lipid droplet organization protein LDO16 (Saccharomyces cerevisiae (strain ATCC 204508 / S288c) (Baker's yeast)).